The sequence spans 424 residues: UDP-N-acetylglucosamine 1-carboxyvinyltransferase (424 aa).

Residue 22 to 23 coordinates phosphoenolpyruvate; sequence KN. Position 93 (R93) interacts with UDP-N-acetyl-alpha-D-glucosamine. C117 (proton donor) is an active-site residue. C117 is modified (2-(S-cysteinyl)pyruvic acid O-phosphothioketal). Residues 122-126, D307, and I329 contribute to the UDP-N-acetyl-alpha-D-glucosamine site; that span reads RPVDL.

This sequence belongs to the EPSP synthase family. MurA subfamily.

Its subcellular location is the cytoplasm. The enzyme catalyses phosphoenolpyruvate + UDP-N-acetyl-alpha-D-glucosamine = UDP-N-acetyl-3-O-(1-carboxyvinyl)-alpha-D-glucosamine + phosphate. It functions in the pathway cell wall biogenesis; peptidoglycan biosynthesis. In terms of biological role, cell wall formation. Adds enolpyruvyl to UDP-N-acetylglucosamine. The polypeptide is UDP-N-acetylglucosamine 1-carboxyvinyltransferase (Chlorobaculum parvum (strain DSM 263 / NCIMB 8327) (Chlorobium vibrioforme subsp. thiosulfatophilum)).